Consider the following 341-residue polypeptide: Lipoyl synthase (341 aa).

[4Fe-4S] cluster-binding residues include Cys-85, Cys-90, Cys-96, Cys-111, Cys-115, Cys-118, and Ser-325. The Radical SAM core domain maps to 97–314 (FSGGTATFMI…AEEGYKMGFK (218 aa)).

It belongs to the radical SAM superfamily. Lipoyl synthase family. It depends on [4Fe-4S] cluster as a cofactor.

It localises to the cytoplasm. The catalysed reaction is [[Fe-S] cluster scaffold protein carrying a second [4Fe-4S](2+) cluster] + N(6)-octanoyl-L-lysyl-[protein] + 2 oxidized [2Fe-2S]-[ferredoxin] + 2 S-adenosyl-L-methionine + 4 H(+) = [[Fe-S] cluster scaffold protein] + N(6)-[(R)-dihydrolipoyl]-L-lysyl-[protein] + 4 Fe(3+) + 2 hydrogen sulfide + 2 5'-deoxyadenosine + 2 L-methionine + 2 reduced [2Fe-2S]-[ferredoxin]. It participates in protein modification; protein lipoylation via endogenous pathway; protein N(6)-(lipoyl)lysine from octanoyl-[acyl-carrier-protein]: step 2/2. Its function is as follows. Catalyzes the radical-mediated insertion of two sulfur atoms into the C-6 and C-8 positions of the octanoyl moiety bound to the lipoyl domains of lipoate-dependent enzymes, thereby converting the octanoylated domains into lipoylated derivatives. This is Lipoyl synthase from Pseudomonas fluorescens (strain SBW25).